The primary structure comprises 211 residues: MSNSAKSPSGPVGDEGRRNYPMSAHTLVTQEQVWAATAKCAKKIAEDYRSFKLTTDNPLYLLCVLKGSFIFTADLARFLADEGVPVKVEFICASSYGTGVETSGQVRMLLDVRDSVENRHILIVEDIVDSAITLQYLMRFMLAKKPASLKTVVLLDKPSGRKVEVLVDYPVITIPHAFVIGYGMDYAESYRELRDICVLKKEYYEKPESKV.

Residues 1 to 20 (MSNSAKSPSGPVGDEGRRNY) are disordered. GMP contacts are provided by residues lysine 66, 125–133 (EDIVDSAIT), lysine 157, and aspartate 185. Residue aspartate 129 is the Proton acceptor of the active site. Residue aspartate 185 participates in Mg(2+) binding.

Belongs to the purine/pyrimidine phosphoribosyltransferase family. Requires Mg(2+) as cofactor.

It is found in the cytoplasm. It carries out the reaction IMP + diphosphate = hypoxanthine + 5-phospho-alpha-D-ribose 1-diphosphate. The catalysed reaction is GMP + diphosphate = guanine + 5-phospho-alpha-D-ribose 1-diphosphate. It functions in the pathway purine metabolism; IMP biosynthesis via salvage pathway; IMP from hypoxanthine: step 1/1. Functionally, converts guanine to guanosine monophosphate, and hypoxanthine to inosine monophosphate. Transfers the 5-phosphoribosyl group from 5-phosphoribosylpyrophosphate onto the purine. Plays a central role in the generation of purine nucleotides through the purine salvage pathway. This chain is Hypoxanthine-guanine phosphoribosyltransferase, found in Leishmania donovani.